The following is a 38-amino-acid chain: Antimicrobial peptide 1 (38 aa).

In terms of processing, disulfide bonds. As to expression, expressed in flowers but not in leaves, seeds or roots (at protein level).

Antimicrobial peptide. Active against fungal species B.cinerea (IC(50)=5.8 uM) and A.niger (IC(50)=5.6 uM) but not against F.oxysporum, F.graminearum, B.sorokinina and P.debaryanum at concentrations below 10 uM. Active against bacterial species P.syringae, B.subtilis and X.campestris. This Taraxacum officinale (Common dandelion) protein is Antimicrobial peptide 1.